A 460-amino-acid polypeptide reads, in one-letter code: Acetyl-coenzyme A carboxylase carboxyl transferase subunit beta, chloroplastic (460 aa).

The CoA carboxyltransferase N-terminal domain maps to 179–460 (LWVQCESCYG…GFFPLTQNGN (282 aa)). 4 residues coordinate Zn(2+): cysteine 183, cysteine 186, cysteine 202, and cysteine 205. Residues 183–205 (CESCYGLNYKKFFKSKMNICEHC) form a C4-type zinc finger.

It belongs to the AccD/PCCB family. As to quaternary structure, acetyl-CoA carboxylase is a heterohexamer composed of biotin carboxyl carrier protein, biotin carboxylase and 2 subunits each of ACCase subunit alpha and ACCase plastid-coded subunit beta (accD). Requires Zn(2+) as cofactor.

It is found in the plastid. It localises to the chloroplast stroma. The enzyme catalyses N(6)-carboxybiotinyl-L-lysyl-[protein] + acetyl-CoA = N(6)-biotinyl-L-lysyl-[protein] + malonyl-CoA. It functions in the pathway lipid metabolism; malonyl-CoA biosynthesis; malonyl-CoA from acetyl-CoA: step 1/1. In terms of biological role, component of the acetyl coenzyme A carboxylase (ACC) complex. Biotin carboxylase (BC) catalyzes the carboxylation of biotin on its carrier protein (BCCP) and then the CO(2) group is transferred by the transcarboxylase to acetyl-CoA to form malonyl-CoA. The sequence is that of Acetyl-coenzyme A carboxylase carboxyl transferase subunit beta, chloroplastic from Cicer arietinum (Chickpea).